The following is a 334-amino-acid chain: Protein-methionine-sulfoxide reductase catalytic subunit MsrP (334 aa).

Residues M1–A44 constitute a signal peptide (tat-type signal). Mo-molybdopterin contacts are provided by residues N88, Y91 to E92, C146, T181, N233, R238, and G249 to K251.

The protein belongs to the MsrP family. As to quaternary structure, heterodimer of a catalytic subunit (MsrP) and a heme-binding subunit (MsrQ). Mo-molybdopterin is required as a cofactor. In terms of processing, predicted to be exported by the Tat system. The position of the signal peptide cleavage has not been experimentally proven.

Its subcellular location is the periplasm. It carries out the reaction L-methionyl-[protein] + a quinone + H2O = L-methionyl-(S)-S-oxide-[protein] + a quinol. It catalyses the reaction L-methionyl-[protein] + a quinone + H2O = L-methionyl-(R)-S-oxide-[protein] + a quinol. Part of the MsrPQ system that repairs oxidized periplasmic proteins containing methionine sulfoxide residues (Met-O), using respiratory chain electrons. Thus protects these proteins from oxidative-stress damage caused by reactive species of oxygen and chlorine generated by the host defense mechanisms. MsrPQ is essential for the maintenance of envelope integrity under bleach stress, rescuing a wide series of structurally unrelated periplasmic proteins from methionine oxidation, including the primary periplasmic chaperone SurA and the lipoprotein Pal. The catalytic subunit MsrP is non-stereospecific, being able to reduce both (R-) and (S-) diastereoisomers of methionine sulfoxide. In Salmonella arizonae (strain ATCC BAA-731 / CDC346-86 / RSK2980), this protein is Protein-methionine-sulfoxide reductase catalytic subunit MsrP.